The primary structure comprises 195 residues: Protein GrpE (195 aa).

The segment covering 1-20 (MSSKEQKTPDEQVLDQKEAA) has biased composition (basic and acidic residues). Residues 1 to 40 (MSSKEQKTPDEQVLDQKEAAKGQQADAAPETADVADPRDE) form a disordered region.

The protein belongs to the GrpE family. Homodimer.

The protein localises to the cytoplasm. In terms of biological role, participates actively in the response to hyperosmotic and heat shock by preventing the aggregation of stress-denatured proteins, in association with DnaK and GrpE. It is the nucleotide exchange factor for DnaK and may function as a thermosensor. Unfolded proteins bind initially to DnaJ; upon interaction with the DnaJ-bound protein, DnaK hydrolyzes its bound ATP, resulting in the formation of a stable complex. GrpE releases ADP from DnaK; ATP binding to DnaK triggers the release of the substrate protein, thus completing the reaction cycle. Several rounds of ATP-dependent interactions between DnaJ, DnaK and GrpE are required for fully efficient folding. The polypeptide is Protein GrpE (Pectobacterium atrosepticum (strain SCRI 1043 / ATCC BAA-672) (Erwinia carotovora subsp. atroseptica)).